The following is a 421-amino-acid chain: FAD-dependent monooxygenase atnJ (421 aa).

Residues 9–29 (LVPLHVVIVGAGIGGLSAAVA) traverse the membrane as a helical segment. FAD is bound by residues glutamate 41 and alanine 54. Arginine 188 is a catalytic residue. The FAD site is built by aspartate 303 and valine 316. The disordered stretch occupies residues 371–392 (RDGDAQAARDSQRKATSGTGQN).

Belongs to the paxM FAD-dependent monooxygenase family. It depends on FAD as a cofactor.

The protein resides in the membrane. It functions in the pathway secondary metabolite biosynthesis; terpenoid biosynthesis. FAD-dependent monooxygenase; part of the gene cluster that mediates the biosynthesis of the meroterpenoids arthripenoids. The pathway begins with the HR-PKS atnH that catalyzes two chain-extension steps to form a reduced triketide, which then primes the SAT domain in the NR-PKS atnG to initiate three more cycles of extension to give a linear hexaketide corresponding to the polyketide part of arthripenoids. The FAD-dependent monooxygenase atnJ then performs an oxidative decarboxylation at C11 of the atnH/atnG product, via an electrophilic aromatic hydroxylation with concomitant ipso-decarboxylation. The membrane-bound polyprenyl transferase atnF then introduces a farnesyl group before the FAD-dependent monooxygenase atnK functions as the first epoxidase on terminal C12'-C13' olefin, followed by a second epoxidation on C7'-C8' catalyzed by atnA. The terpene cyclase/mutase atnI then initiates the sequential tricyclic ring formation through protonation of the terminal epoxide and catalyzes the regioselective and stereoselective 6/6/6-tricyclic ring formation. The cytochrome P450 monooxygenase atnM is responsible for hydroxylating both C1' and C10'. The next steps may involve ketoreduction and acetyl transfer by the ketoreductase atnB and the acetyltransferase atnC, and lead to the production of arthripenoid B, the final biosynthetic product of the atn cluster. The hydroquinone moiety in arthripenoid B is prone to undergo spontaneous oxidation to afford a benzoquinone compound, a key intermediate for generating structure diversity. For instance, addition of a cysteine followed by ring contraction gives arthripenoid A, tautomerization gives the main product arthripenoid C, addition of a molecular of water or amine affords arthripenoid D or E, respectively, and loss of one water forms arthripenoid F. The sequence is that of FAD-dependent monooxygenase atnJ from Arthrinium sp.